We begin with the raw amino-acid sequence, 177 residues long: MLDAFSRVVVNSDAKAAYVGGSDLQALKSFIADGNKRLDAVNSIVSNASCMVSDAVSGMICENPGLISPGGNCYTNRRMAACLRDGEIILRYVSYALLAGDASVLEDRCLNGLKETYIALGVPTNSSIRAVSIMKAQAVAFITNTATERKMSFAAGDCTSLASEVASYFDRVGAAIS.

Phycourobilin contacts are provided by cysteine 50 and cysteine 61. N4-methylasparagine is present on asparagine 72. 2 residues coordinate (2R,3E)-phycoerythrobilin: cysteine 82 and cysteine 158.

Belongs to the phycobiliprotein family. In terms of assembly, heteromer of 6 alpha, 6 beta and one gamma chain. In terms of processing, contains two covalently linked phycoerythrobilin chromophores and one covalently linked phycourobilin chromophore.

Its subcellular location is the plastid. The protein resides in the chloroplast thylakoid membrane. Its function is as follows. Light-harvesting photosynthetic bile pigment-protein from the phycobiliprotein complex. The chain is B-phycoerythrin beta chain (cpeB) from Porphyridium purpureum (Red alga).